Here is a 201-residue protein sequence, read N- to C-terminus: Adenylyl-sulfate kinase (201 aa).

Residue 35 to 42 coordinates ATP; the sequence is GLSGSGKS. Residue serine 109 is the Phosphoserine intermediate of the active site.

Belongs to the APS kinase family.

The catalysed reaction is adenosine 5'-phosphosulfate + ATP = 3'-phosphoadenylyl sulfate + ADP + H(+). Its pathway is sulfur metabolism; hydrogen sulfide biosynthesis; sulfite from sulfate: step 2/3. Its function is as follows. Catalyzes the synthesis of activated sulfate. The chain is Adenylyl-sulfate kinase from Shigella flexneri.